Consider the following 692-residue polypeptide: Elongation factor G (692 aa).

In terms of domain architecture, tr-type G spans E8–L282. Residues A17–T24, D81–H85, and N135–D138 contribute to the GTP site.

Belongs to the TRAFAC class translation factor GTPase superfamily. Classic translation factor GTPase family. EF-G/EF-2 subfamily.

It localises to the cytoplasm. Catalyzes the GTP-dependent ribosomal translocation step during translation elongation. During this step, the ribosome changes from the pre-translocational (PRE) to the post-translocational (POST) state as the newly formed A-site-bound peptidyl-tRNA and P-site-bound deacylated tRNA move to the P and E sites, respectively. Catalyzes the coordinated movement of the two tRNA molecules, the mRNA and conformational changes in the ribosome. The polypeptide is Elongation factor G (Bacillus thuringiensis subsp. konkukian (strain 97-27)).